The primary structure comprises 356 residues: tRNA N6-adenosine threonylcarbamoyltransferase (356 aa).

2 residues coordinate Fe cation: H115 and H119. Residues 138-142, D171, G184, and N283 contribute to the substrate site; that span reads LVSGG. A Fe cation-binding site is contributed by D311.

The protein belongs to the KAE1 / TsaD family. Requires Fe(2+) as cofactor.

The protein resides in the cytoplasm. The catalysed reaction is L-threonylcarbamoyladenylate + adenosine(37) in tRNA = N(6)-L-threonylcarbamoyladenosine(37) in tRNA + AMP + H(+). Its function is as follows. Required for the formation of a threonylcarbamoyl group on adenosine at position 37 (t(6)A37) in tRNAs that read codons beginning with adenine. Is involved in the transfer of the threonylcarbamoyl moiety of threonylcarbamoyl-AMP (TC-AMP) to the N6 group of A37, together with TsaE and TsaB. TsaD likely plays a direct catalytic role in this reaction. The chain is tRNA N6-adenosine threonylcarbamoyltransferase from Prochlorococcus marinus (strain AS9601).